The primary structure comprises 232 residues: Ubiquinone biosynthesis O-methyltransferase (232 aa).

Arginine 36, glycine 55, aspartate 76, and methionine 120 together coordinate S-adenosyl-L-methionine.

This sequence belongs to the methyltransferase superfamily. UbiG/COQ3 family.

The enzyme catalyses a 3-demethylubiquinol + S-adenosyl-L-methionine = a ubiquinol + S-adenosyl-L-homocysteine + H(+). It catalyses the reaction a 3-(all-trans-polyprenyl)benzene-1,2-diol + S-adenosyl-L-methionine = a 2-methoxy-6-(all-trans-polyprenyl)phenol + S-adenosyl-L-homocysteine + H(+). It participates in cofactor biosynthesis; ubiquinone biosynthesis. Functionally, O-methyltransferase that catalyzes the 2 O-methylation steps in the ubiquinone biosynthetic pathway. This Burkholderia ambifaria (strain MC40-6) protein is Ubiquinone biosynthesis O-methyltransferase.